A 394-amino-acid polypeptide reads, in one-letter code: MHLLDTLAEGLKEIDARGLRRRRRTADTPCAAHMTVDGRAIIGFASNDYLGLAAHPQLIAAIAEGAQRYGAGSGGSHLLGGHSRAHAQLEDDLAEFVGGFVENARALYFSTGYMANLATLTALAGRGTTLFSDALNHASLIDGARLSRADVQIYPHCDTDALSAMLEASDADVKVIVSDTVFSMDGDIAPLPRLLELAEQHGAWLIVDDAHGFGVLGPQGRGAIAQAALRSPNLISIGTLGKAAGVSGAFVAAHETVIEWLVQRARPYIFTTASVPAAAHAVSASLRIIGGEEGDARRAHLQQLIGRTRAMLKATPWLPVDSHTAVQPLIIGANDATLEIAATLDRAGLWVPAIRPPTVPTGTSRLRISLSAAHSQADLDRLEAGLQQLGAKAA.

Arg-21 lines the substrate pocket. Position 112–113 (112–113) interacts with pyridoxal 5'-phosphate; that stretch reads GY. Position 137 (His-137) interacts with substrate. Residues Ser-183, His-211, and Thr-239 each coordinate pyridoxal 5'-phosphate. The residue at position 242 (Lys-242) is an N6-(pyridoxal phosphate)lysine. Thr-358 is a binding site for substrate.

Belongs to the class-II pyridoxal-phosphate-dependent aminotransferase family. BioF subfamily. Homodimer. Pyridoxal 5'-phosphate is required as a cofactor.

It catalyses the reaction 6-carboxyhexanoyl-[ACP] + L-alanine + H(+) = (8S)-8-amino-7-oxononanoate + holo-[ACP] + CO2. It participates in cofactor biosynthesis; biotin biosynthesis. Its function is as follows. Catalyzes the decarboxylative condensation of pimeloyl-[acyl-carrier protein] and L-alanine to produce 8-amino-7-oxononanoate (AON), [acyl-carrier protein], and carbon dioxide. This chain is 8-amino-7-oxononanoate synthase, found in Paraburkholderia xenovorans (strain LB400).